The sequence spans 158 residues: ABA-responsive protein ABR18 (158 aa).

This sequence belongs to the BetVI family.

This chain is ABA-responsive protein ABR18, found in Pisum sativum (Garden pea).